The sequence spans 302 residues: tRNA dimethylallyltransferase (302 aa).

Position 12–19 (12–19 (GPTASGKS)) interacts with ATP. Substrate is bound at residue 14–19 (TASGKS). Positions 37 to 40 (DSMQ) are interaction with substrate tRNA.

Belongs to the IPP transferase family. Monomer. Mg(2+) serves as cofactor.

It catalyses the reaction adenosine(37) in tRNA + dimethylallyl diphosphate = N(6)-dimethylallyladenosine(37) in tRNA + diphosphate. In terms of biological role, catalyzes the transfer of a dimethylallyl group onto the adenine at position 37 in tRNAs that read codons beginning with uridine, leading to the formation of N6-(dimethylallyl)adenosine (i(6)A). The protein is tRNA dimethylallyltransferase of Corynebacterium diphtheriae (strain ATCC 700971 / NCTC 13129 / Biotype gravis).